The following is an 88-amino-acid chain: MANTVSAKKMTRKIAKRTAINRSRRSRMRTFVRKVEEAIATGDQGQALAALRVAEPEIMRAAQHGIVHKNNASRKVSRLAARVKAIAA.

The protein belongs to the bacterial ribosomal protein bS20 family.

Binds directly to 16S ribosomal RNA. The polypeptide is Small ribosomal subunit protein bS20 (Methylorubrum populi (strain ATCC BAA-705 / NCIMB 13946 / BJ001) (Methylobacterium populi)).